The chain runs to 631 residues: Pescadillo homolog (631 aa).

The 94-residue stretch at 321–414 (RLRTLFKGLK…QLLPTNDYFL (94 aa)) folds into the BRCT domain. A compositionally biased stretch (basic and acidic residues) spans 428–442 (SKRDSYIPPEEKALH). Disordered regions lie at residues 428–471 (SKRD…EADQ) and 489–560 (YKKY…EVDE). 2 positions are modified to phosphoserine: serine 453 and serine 457. Acidic residues-rich tracts occupy residues 453–471 (SEEE…EADQ) and 498–525 (VNED…EDVD). The segment covering 526 to 538 (EQTKRKQQEKEKM) has biased composition (basic and acidic residues). A compositionally biased stretch (basic residues) spans 544–553 (KVHKVNKRQV). Residues 593-629 (LRKKRRNIDADTKEAKKAAKREARKLAAEAAARAAKL) are a coiled coil.

This sequence belongs to the pescadillo family.

The protein localises to the nucleus. The protein resides in the nucleolus. It localises to the nucleoplasm. Required for maturation of ribosomal RNAs and formation of the large ribosomal subunit. The polypeptide is Pescadillo homolog (Drosophila persimilis (Fruit fly)).